A 273-amino-acid chain; its full sequence is NADPH-dependent 7-cyano-7-deazaguanine reductase (273 aa).

Val-81–Ser-83 provides a ligand contact to substrate. Ser-83–Lys-84 lines the NADPH pocket. Cys-179 functions as the Thioimide intermediate in the catalytic mechanism. The active-site Proton donor is the Asp-186. Ala-218 to Glu-219 is a binding site for substrate. Arg-247–Gly-248 contacts NADPH.

Belongs to the GTP cyclohydrolase I family. QueF type 2 subfamily. Homodimer.

The protein resides in the cytoplasm. The catalysed reaction is 7-aminomethyl-7-carbaguanine + 2 NADP(+) = 7-cyano-7-deazaguanine + 2 NADPH + 3 H(+). It functions in the pathway tRNA modification; tRNA-queuosine biosynthesis. Its function is as follows. Catalyzes the NADPH-dependent reduction of 7-cyano-7-deazaguanine (preQ0) to 7-aminomethyl-7-deazaguanine (preQ1). This is NADPH-dependent 7-cyano-7-deazaguanine reductase from Rickettsia felis (strain ATCC VR-1525 / URRWXCal2) (Rickettsia azadi).